The sequence spans 127 residues: Major sperm protein 55/57 (127 aa).

An N-acetylalanine modification is found at alanine 2. Positions 9–126 constitute an MSP domain; that stretch reads DIQTQPGTKI…RRKNLPIEYN (118 aa).

As to expression, sperm.

It localises to the cell projection. It is found in the pseudopodium. The protein resides in the cytoplasm. The protein localises to the cytoskeleton. Central component in molecular interactions underlying sperm crawling. Forms an extensive filament system that extends from sperm villipoda, along the leading edge of the pseudopod. The chain is Major sperm protein 55/57 (msp-55) from Caenorhabditis elegans.